We begin with the raw amino-acid sequence, 171 residues long: MRRVLFSCFCGLLWSSSGWAVDPLGTININLHGNVVDFSCTVNTADIDKTVDLGRWPTTQLLNAGDTTALVPFSLRLEGCPPGSVAILFTGTPASDTNLLALDDPAMAQTVAIELRNSDRSRLALGEASPTEEVDANGNVTLNFFANYRALASGVRPGVAKADAIFMINYN.

The signal sequence occupies residues 1-20 (MRRVLFSCFCGLLWSSSGWA). Residues Cys40 and Cys80 are joined by a disulfide bond.

Belongs to the fimbrial protein family.

The protein resides in the fimbrium. In terms of biological role, part of the sfmACDHF fimbrial operon. Could contribute to adhesion to various surfaces in specific environmental niches. Increases adhesion to eukaryotic T24 bladder epithelial cells in the absence of fim genes. This is an uncharacterized protein from Escherichia coli (strain K12).